The primary structure comprises 684 residues: UvrABC system protein B (684 aa).

The region spanning 30 to 188 (EGVQRGDRWQ…QELVSLHYVR (159 aa)) is the Helicase ATP-binding domain. An ATP-binding site is contributed by 43 to 50 (GVTGSGKT). The Beta-hairpin motif lies at 96–119 (YYDFYQPEAYLPALDKYIAKDLRI). A Helicase C-terminal domain is found at 435–601 (QIDDLLGEIR…SIIKSVEQVL (167 aa)). One can recognise a UVR domain in the interval 641–676 (YSMAESLRLEMQEAALKMEYEKAAYLRDEITKFEHR).

This sequence belongs to the UvrB family. As to quaternary structure, forms a heterotetramer with UvrA during the search for lesions. Interacts with UvrC in an incision complex.

It is found in the cytoplasm. In terms of biological role, the UvrABC repair system catalyzes the recognition and processing of DNA lesions. A damage recognition complex composed of 2 UvrA and 2 UvrB subunits scans DNA for abnormalities. Upon binding of the UvrA(2)B(2) complex to a putative damaged site, the DNA wraps around one UvrB monomer. DNA wrap is dependent on ATP binding by UvrB and probably causes local melting of the DNA helix, facilitating insertion of UvrB beta-hairpin between the DNA strands. Then UvrB probes one DNA strand for the presence of a lesion. If a lesion is found the UvrA subunits dissociate and the UvrB-DNA preincision complex is formed. This complex is subsequently bound by UvrC and the second UvrB is released. If no lesion is found, the DNA wraps around the other UvrB subunit that will check the other stand for damage. The chain is UvrABC system protein B from Chlorobium limicola (strain DSM 245 / NBRC 103803 / 6330).